Consider the following 249-residue polypeptide: 2-C-methyl-D-erythritol 4-phosphate cytidylyltransferase (249 aa).

It belongs to the IspD/TarI cytidylyltransferase family. IspD subfamily.

The catalysed reaction is 2-C-methyl-D-erythritol 4-phosphate + CTP + H(+) = 4-CDP-2-C-methyl-D-erythritol + diphosphate. The protein operates within isoprenoid biosynthesis; isopentenyl diphosphate biosynthesis via DXP pathway; isopentenyl diphosphate from 1-deoxy-D-xylulose 5-phosphate: step 2/6. Catalyzes the formation of 4-diphosphocytidyl-2-C-methyl-D-erythritol from CTP and 2-C-methyl-D-erythritol 4-phosphate (MEP). The chain is 2-C-methyl-D-erythritol 4-phosphate cytidylyltransferase from Thermobifida fusca (strain YX).